A 173-amino-acid chain; its full sequence is Pyrimidine operon regulatory protein (173 aa).

Substrate contacts are provided by residues T40–R41, D97–T105, and R130. The PRPP-binding motif lies at V93–T105.

Belongs to the purine/pyrimidine phosphoribosyltransferase family. PyrR subfamily.

In terms of biological role, regulates transcriptional attenuation of the pyrimidine nucleotide (pyr) operon in response to exogenous pyrimidines, probably by binding to specific sites on pyr mRNA. This probably disrupts an antiterminator hairpin in the RNA and favors formation of a downstream transcription terminator, leading to a reduced expression of downstream genes. The protein is Pyrimidine operon regulatory protein of Lactococcus lactis subsp. lactis (strain IL1403) (Streptococcus lactis).